A 194-amino-acid chain; its full sequence is Inner membrane-spanning protein YciB (194 aa).

5 helical membrane passes run 1–21, 49–69, 77–97, 120–140, and 150–170; these read MKLL…KTTN, EKMH…TILF, WKPS…GWVS, LNYS…YVAY, and FKLF…GVYI.

It belongs to the YciB family.

It is found in the cell inner membrane. In terms of biological role, plays a role in cell envelope biogenesis, maintenance of cell envelope integrity and membrane homeostasis. The chain is Inner membrane-spanning protein YciB from Hahella chejuensis (strain KCTC 2396).